Reading from the N-terminus, the 343-residue chain is Olfactory receptor 1E3 (343 aa).

At 1 to 28 the chain is on the extracellular side; it reads MMKKNQTMISEFLLLGLPIQPEQQNLFY. N-linked (GlcNAc...) asparagine glycosylation occurs at Asn-5. A helical membrane pass occupies residues 29 to 49; the sequence is ALFLAVYLTTLLGNLLVIVLI. Over 50 to 107 the chain is Cytoplasmic; the sequence is RLDSHLHMPMYLCLSNLSFSDLCFSSVTMPKLLQNMQSQNPSIPFADCLAQMYFHLFY. Cys-97 and Cys-179 are joined by a disulfide. The helical transmembrane segment at 108-128 threads the bilayer; that stretch reads GVLESFLLVVMAYHCYVAICF. Residues 129 to 141 lie on the Extracellular side of the membrane; that stretch reads PLHYTTIMSPKCC. A helical transmembrane segment spans residues 142–162; sequence LGLLTLSWLLTTAHATLHTLL. At 163 to 195 the chain is on the cytoplasmic side; it reads MARLSFCAENVIPHFFCDTSTLLKLACSNTQVN. The chain crosses the membrane as a helical span at residues 196-216; it reads GWVMFFMGGLILVIPFLLLIM. At 217-242 the chain is on the extracellular side; it reads SCARIVSTILRVPSTGGIQKAFSTCG. A helical membrane pass occupies residues 243–263; the sequence is PHLSVVSLFYGTIIGLYLCPL. The Cytoplasmic portion of the chain corresponds to 264–271; sequence TNHNTVKD. The chain crosses the membrane as a helical span at residues 272–292; sequence TVMAVMYTGVTHMLNPFIYSL. Over 293 to 310 the chain is Extracellular; that stretch reads RNRDMRGNPGQSLQHKEN. A helical transmembrane segment spans residues 311-331; that stretch reads FFVFKIVIVGILPLLNLVGVV. At 332–343 the chain is on the cytoplasmic side; that stretch reads KLIMKYHSKSVA.

The protein belongs to the G-protein coupled receptor 1 family.

The protein localises to the cell membrane. Odorant receptor. In Homo sapiens (Human), this protein is Olfactory receptor 1E3 (OR1E3).